Consider the following 735-residue polypeptide: Protein PAT1 homolog 2 (735 aa).

Disordered regions lie at residues 39–93 and 336–366; these read TFGL…REVK and QLHPQHRRILSQRQRPQSSSRKQWESRPDPY. Basic and acidic residues-rich tracts occupy residues 49–59 and 67–93; these read EPTKQEEDHKK and PKIEEPEKPQPIKETKKPEKSPLREVK. Residues 346–356 are compositionally biased toward low complexity; the sequence is SQRQRPQSSSR.

This sequence belongs to the PAT1 family. Interacts with ribonucleoprotein complex components. Interacts with cpeb.

The protein localises to the cytoplasm. It is found in the nucleus. RNA-binding protein that acts as a translational repressor. In Xenopus tropicalis (Western clawed frog), this protein is Protein PAT1 homolog 2 (patl2).